The primary structure comprises 102 residues: ATP-dependent Clp protease adapter protein ClpS (102 aa).

The protein belongs to the ClpS family. As to quaternary structure, binds to the N-terminal domain of the chaperone ClpA.

Its function is as follows. Involved in the modulation of the specificity of the ClpAP-mediated ATP-dependent protein degradation. The polypeptide is ATP-dependent Clp protease adapter protein ClpS (Shewanella denitrificans (strain OS217 / ATCC BAA-1090 / DSM 15013)).